The sequence spans 200 residues: uncharacterized protein (200 aa).

The tract at residues 149–200 (APDPGGSVATEEVLRSDDRDSHTQDSASEWPEGNDSVGSAAMRIDLSRIGGT) is disordered. The span at 160–171 (EVLRSDDRDSHT) shows a compositional bias: basic and acidic residues.

The protein to A.tumefaciens Ti plasmid conjugal transfer region I ORFR2 and ORFR3.

This is an uncharacterized protein from Sinorhizobium fredii (strain NBRC 101917 / NGR234).